The following is a 143-amino-acid chain: Putative mediator of RNA polymerase II transcription subunit 11 (143 aa).

Residues 97–143 adopt a coiled-coil conformation; sequence ILSHLEDLNNIVENNQEKQEKEKQEKEKLEKEKLEKEKQQSNEMNID. Residues 109-143 form a disordered region; sequence ENNQEKQEKEKQEKEKLEKEKLEKEKQQSNEMNID. Residues 111-136 show a composition bias toward basic and acidic residues; sequence NQEKQEKEKQEKEKLEKEKLEKEKQQ.

Belongs to the Mediator complex subunit 11 family. As to quaternary structure, component of the Mediator complex.

It is found in the nucleus. Component of the Mediator complex, a coactivator involved in the regulated transcription of nearly all RNA polymerase II-dependent genes. Mediator functions as a bridge to convey information from gene-specific regulatory proteins to the basal RNA polymerase II transcription machinery. Mediator is recruited to promoters by direct interactions with regulatory proteins and serves as a scaffold for the assembly of a functional pre-initiation complex with RNA polymerase II and the general transcription factors. The polypeptide is Putative mediator of RNA polymerase II transcription subunit 11 (med11) (Dictyostelium discoideum (Social amoeba)).